A 358-amino-acid polypeptide reads, in one-letter code: Heme A synthase (358 aa).

Transmembrane regions (helical) follow at residues 25–45 (LVRY…MVGG), 111–131 (LLAR…WLTG), 141–161 (MLGL…MVAS), 176–196 (IHLT…RGLV), 210–230 (FAGW…LVAG), 269–289 (VQFV…LHAV), 304–324 (TIVL…TLLM), and 326–346 (APLH…AFAV). Position 273 (His-273) interacts with heme. His-334 provides a ligand contact to heme.

The protein belongs to the COX15/CtaA family. Type 2 subfamily. In terms of assembly, interacts with CtaB. It depends on heme b as a cofactor.

It is found in the cell membrane. The enzyme catalyses Fe(II)-heme o + 2 A + H2O = Fe(II)-heme a + 2 AH2. Its pathway is porphyrin-containing compound metabolism; heme A biosynthesis; heme A from heme O: step 1/1. In terms of biological role, catalyzes the conversion of heme O to heme A by two successive hydroxylations of the methyl group at C8. The first hydroxylation forms heme I, the second hydroxylation results in an unstable dihydroxymethyl group, which spontaneously dehydrates, resulting in the formyl group of heme A. This Brucella abortus (strain S19) protein is Heme A synthase.